We begin with the raw amino-acid sequence, 51 residues long: Large ribosomal subunit protein bL33 (51 aa).

The tract at residues methionine 1–arginine 24 is disordered.

It belongs to the bacterial ribosomal protein bL33 family.

This chain is Large ribosomal subunit protein bL33, found in Cellvibrio japonicus (strain Ueda107) (Pseudomonas fluorescens subsp. cellulosa).